Consider the following 123-residue polypeptide: Ragulator complex protein LAMTOR3-B (123 aa).

This sequence belongs to the LAMTOR3 family. In terms of assembly, part of the Ragulator complex composed of lamtor1, lamtor2, lamtor3, lamtor4 and lamtor5. The Ragulator complex interacts with slc38a9; the probable amino acid sensor. Component of the lysosomal folliculin complex (LFC).

It localises to the late endosome membrane. In terms of biological role, as part of the Ragulator complex it is involved in amino acid sensing and activation of mTORC1, a signaling complex promoting cell growth in response to growth factors, energy levels, and amino acids. Activated by amino acids through a mechanism involving the lysosomal V-ATPase, the Ragulator plays a dual role for the small GTPases Rag (RagA/RRAGA, RagB/RRAGB, RagC/RRAGC and/or RagD/RRAGD): it (1) acts as a guanine nucleotide exchange factor (GEF), activating the small GTPases Rag and (2) mediates recruitment of Rag GTPases to the lysosome membrane. Activated Ragulator and Rag GTPases function as a scaffold recruiting mTORC1 to lysosomes where it is in turn activated. The chain is Ragulator complex protein LAMTOR3-B (lamtor3-b) from Xenopus laevis (African clawed frog).